Here is a 172-residue protein sequence, read N- to C-terminus: 3-hydroxydecanoyl-[acyl-carrier-protein] dehydratase (172 aa).

H71 is an active-site residue.

This sequence belongs to the thioester dehydratase family. FabA subfamily. Homodimer.

It localises to the cytoplasm. It catalyses the reaction a (3R)-hydroxyacyl-[ACP] = a (2E)-enoyl-[ACP] + H2O. The enzyme catalyses (3R)-hydroxydecanoyl-[ACP] = (2E)-decenoyl-[ACP] + H2O. The catalysed reaction is (2E)-decenoyl-[ACP] = (3Z)-decenoyl-[ACP]. Its pathway is lipid metabolism; fatty acid biosynthesis. Functionally, necessary for the introduction of cis unsaturation into fatty acids. Catalyzes the dehydration of (3R)-3-hydroxydecanoyl-ACP to E-(2)-decenoyl-ACP and then its isomerization to Z-(3)-decenoyl-ACP. Can catalyze the dehydratase reaction for beta-hydroxyacyl-ACPs with saturated chain lengths up to 16:0, being most active on intermediate chain length. The chain is 3-hydroxydecanoyl-[acyl-carrier-protein] dehydratase from Salmonella agona (strain SL483).